Here is a 545-residue protein sequence, read N- to C-terminus: ATP synthase subunit alpha (545 aa).

An ATP-binding site is contributed by 173–180; the sequence is GDRQTGKT.

The protein belongs to the ATPase alpha/beta chains family. As to quaternary structure, F-type ATPases have 2 components, CF(1) - the catalytic core - and CF(0) - the membrane proton channel. CF(1) has five subunits: alpha(3), beta(3), gamma(1), delta(1), epsilon(1). CF(0) has three main subunits: a(1), b(2) and c(9-12). The alpha and beta chains form an alternating ring which encloses part of the gamma chain. CF(1) is attached to CF(0) by a central stalk formed by the gamma and epsilon chains, while a peripheral stalk is formed by the delta and b chains.

Its subcellular location is the cell membrane. The enzyme catalyses ATP + H2O + 4 H(+)(in) = ADP + phosphate + 5 H(+)(out). Its function is as follows. Produces ATP from ADP in the presence of a proton gradient across the membrane. The alpha chain is a regulatory subunit. This Leifsonia xyli subsp. xyli (strain CTCB07) protein is ATP synthase subunit alpha.